Here is an 887-residue protein sequence, read N- to C-terminus: Pre-mRNA-splicing factor cwf22 (887 aa).

The interval 1 to 27 (MEKEDKSFGIGMLDYNRENPESSGHSR) is disordered. One can recognise an MIF4G domain in the interval 124-307 (KKSINGLINK…EVLFQTRKDK (184 aa)). Positions 366–401 (ILGEEDDDENEEDEEDSEETSESEEDESVNDEKPQV) are disordered. Residues 368–394 (GEEDDDENEEDEEDSEETSESEEDESV) show a composition bias toward acidic residues. Residues 411-527 (NLRKSIYLTI…GWEVYDCVRL (117 aa)) enclose the MI domain. 2 disordered regions span residues 607–834 (MPKS…KTYH) and 867–887 (GELY…PRAD). The segment covering 618-662 (EGYSSGSETGSTYSSSYSSTYSRGRSYSRSTRSYSKSRSYSRSRS) has biased composition (low complexity). Ser662 carries the post-translational modification Phosphoserine. At Thr664 the chain carries Phosphothreonine. Residues 677–690 (KDRELSPRGRERSS) show a composition bias toward basic and acidic residues. Over residues 691 to 712 (NRNSYSDLSRSSSLSRGRSRSY) the composition is skewed to low complexity. Residues 717 to 726 (RLIESEDKGY) show a composition bias toward basic and acidic residues. Residues 736 to 746 (RKYRSRQRYRR) show a composition bias toward basic residues. Composition is skewed to low complexity over residues 747–762 (SYAG…SRSP) and 769–791 (SMSC…SRSP). The segment covering 799–809 (DSLSYNRQYSP) has biased composition (polar residues).

This sequence belongs to the CWC22 family. Belongs to the 40S cdc5-associated complex (or cwf complex), a spliceosome sub-complex reminiscent of a late-stage spliceosome composed of the U2, U5 and U6 snRNAs and at least brr2, cdc5, cwf2/prp3, cwf3/syf1, cwf4/syf3, cwf5/ecm2, spp42/cwf6, cwf7/spf27, cwf8, cwf9, cwf10, cwf11, cwf12, prp45/cwf13, cwf14, cwf15, cwf16, cwf17, cwf18, cwf19, cwf20, cwf21, cwf22, cwf23, cwf24, cwf25, cwf26, cyp7/cwf27, cwf28, cwf29/ist3, lea1, msl1, prp5/cwf1, prp10, prp12/sap130, prp17, prp22, sap61, sap62, sap114, sap145, slu7, smb1, smd1, smd3, smf1, smg1 and syf2.

It localises to the cytoplasm. The protein resides in the nucleus. Its function is as follows. May be involved in pre-mRNA splicing. The polypeptide is Pre-mRNA-splicing factor cwf22 (cwf22) (Schizosaccharomyces pombe (strain 972 / ATCC 24843) (Fission yeast)).